Reading from the N-terminus, the 292-residue chain is Keratin-associated protein 10-9 (292 aa).

25 repeat units span residues 26-30 (CCEPP), 31-35 (CCATS), 36-40 (CCAPA), 57-61 (CCQVT), 79-83 (CCQQS), 99-103 (CCVPV), 104-108 (CCKPV), 109-113 (CCVPV), 114-118 (CCGAS), 120-124 (CCQQS), 130-134 (CCASS), 140-144 (CCVPV), 145-149 (CCKPV), 150-154 (CCAPT), 162-166 (CCQQS), 172-176 (CCTSS), 182-186 (YCVPV), 187-191 (CCKPV), 192-196 (CCKPI), 197-201 (CCVPV), 209-213 (CCQQS), 219-223 (CCTTS), 224-228 (CCRPS), 243-247 (CCVPV), and 250-254 (CCAPT). The segment at 26–254 (CCEPPCCATS…VPVSSCCAPT (229 aa)) is 25 X 5 AA repeats of C-C-X(3).

This sequence belongs to the KRTAP type 10 family. Interacts with hair keratins. In terms of tissue distribution, restricted to a narrow region of the hair fiber cuticle, lying approximately 20 cell layers above the apex of the dermal papilla of the hair root; not detected in any other tissues.

Functionally, in the hair cortex, hair keratin intermediate filaments are embedded in an interfilamentous matrix, consisting of hair keratin-associated proteins (KRTAP), which are essential for the formation of a rigid and resistant hair shaft through their extensive disulfide bond cross-linking with abundant cysteine residues of hair keratins. The matrix proteins include the high-sulfur and high-glycine-tyrosine keratins. This chain is Keratin-associated protein 10-9 (KRTAP10-9), found in Homo sapiens (Human).